We begin with the raw amino-acid sequence, 393 residues long: NAD(P)H-quinone oxidoreductase subunit H, chloroplastic (393 aa).

It belongs to the complex I 49 kDa subunit family. As to quaternary structure, NDH is composed of at least 16 different subunits, 5 of which are encoded in the nucleus.

It is found in the plastid. The protein localises to the chloroplast thylakoid membrane. The enzyme catalyses a plastoquinone + NADH + (n+1) H(+)(in) = a plastoquinol + NAD(+) + n H(+)(out). It catalyses the reaction a plastoquinone + NADPH + (n+1) H(+)(in) = a plastoquinol + NADP(+) + n H(+)(out). Its function is as follows. NDH shuttles electrons from NAD(P)H:plastoquinone, via FMN and iron-sulfur (Fe-S) centers, to quinones in the photosynthetic chain and possibly in a chloroplast respiratory chain. The immediate electron acceptor for the enzyme in this species is believed to be plastoquinone. Couples the redox reaction to proton translocation, and thus conserves the redox energy in a proton gradient. This chain is NAD(P)H-quinone oxidoreductase subunit H, chloroplastic, found in Lepidium virginicum (Virginia pepperweed).